The primary structure comprises 228 residues: 5'(3')-deoxyribonucleotidase, mitochondrial (228 aa).

The N-terminal 31 residues, 1–31 (MIRLGGWCARRLCSAAVPAGRRGAAGGLGLA), are a transit peptide targeting the mitochondrion. The Nucleophile role is filled by Asp-41. The Mg(2+) site is built by Asp-41 and Asp-43. Asp-43 serves as the catalytic Proton donor. Residues Asp-43, Phe-49, Phe-75, Trp-76, Val-77, Trp-96, Thr-130, and Lys-165 each coordinate substrate. Asp-176 lines the Mg(2+) pocket.

This sequence belongs to the 5'(3')-deoxyribonucleotidase family. In terms of assembly, homodimer. The cofactor is Mg(2+). In terms of tissue distribution, highly expressed in heart, brain and skeletal muscle. Detected at very low levels in kidney and pancreas.

Its subcellular location is the mitochondrion. Dephosphorylates specifically the 5' and 2'(3')-phosphates of uracil and thymine deoxyribonucleotides, and so protects mitochondrial DNA replication from excess dTTP. Has only marginal activity towards dIMP and dGMP. The protein is 5'(3')-deoxyribonucleotidase, mitochondrial (NT5M) of Homo sapiens (Human).